Reading from the N-terminus, the 441-residue chain is Serine carboxypeptidase-like 2 (441 aa).

Positions M1–S29 are cleaved as a signal peptide. 3 disulfide bridges follow: C88-C331, C252-C266, and C290-C297. N-linked (GlcNAc...) asparagine glycosylation is present at N109. S184 is a catalytic residue. N350 is a glycosylation site (N-linked (GlcNAc...) asparagine). Residue D366 is part of the active site. The N-linked (GlcNAc...) asparagine glycan is linked to N382. H419 is an active-site residue.

Belongs to the peptidase S10 family. Expressed in seedlings and roots.

It localises to the secreted. Functionally, probable carboxypeptidase. The sequence is that of Serine carboxypeptidase-like 2 (SCPL2) from Arabidopsis thaliana (Mouse-ear cress).